Here is a 254-residue protein sequence, read N- to C-terminus: Small ribosomal subunit protein uS2 (254 aa).

The span at 228 to 248 (RKERKGQDAEEELKKASEPKA) shows a compositional bias: basic and acidic residues. Residues 228–254 (RKERKGQDAEEELKKASEPKAAEAAAE) are disordered.

Belongs to the universal ribosomal protein uS2 family.

In Nitratidesulfovibrio vulgaris (strain ATCC 29579 / DSM 644 / CCUG 34227 / NCIMB 8303 / VKM B-1760 / Hildenborough) (Desulfovibrio vulgaris), this protein is Small ribosomal subunit protein uS2.